The chain runs to 334 residues: Probable GTP 3',8-cyclase (334 aa).

In terms of domain architecture, Radical SAM core spans 24-256 (PYGRKVTGLR…RKKYIIDGVE (233 aa)). Position 33 (Arg33) interacts with GTP. [4Fe-4S] cluster-binding residues include Cys40 and Cys44. Tyr46 contributes to the S-adenosyl-L-methionine binding site. Cys47 serves as a coordination point for [4Fe-4S] cluster. Lys85 contacts GTP. Residue Gly89 coordinates S-adenosyl-L-methionine. Thr113 serves as a coordination point for GTP. Ser137 contributes to the S-adenosyl-L-methionine binding site. A GTP-binding site is contributed by Lys176. 2 residues coordinate [4Fe-4S] cluster: Cys269 and Cys272. Residue 274-276 (RLR) coordinates GTP. Cys286 provides a ligand contact to [4Fe-4S] cluster.

The protein belongs to the radical SAM superfamily. MoaA family. It depends on [4Fe-4S] cluster as a cofactor.

The catalysed reaction is GTP + AH2 + S-adenosyl-L-methionine = (8S)-3',8-cyclo-7,8-dihydroguanosine 5'-triphosphate + 5'-deoxyadenosine + L-methionine + A + H(+). Its pathway is cofactor biosynthesis; molybdopterin biosynthesis. Functionally, catalyzes the cyclization of GTP to (8S)-3',8-cyclo-7,8-dihydroguanosine 5'-triphosphate. The protein is Probable GTP 3',8-cyclase of Methanosarcina acetivorans (strain ATCC 35395 / DSM 2834 / JCM 12185 / C2A).